The sequence spans 128 residues: Ribonuclease P protein component (128 aa).

This sequence belongs to the RnpA family. Consists of a catalytic RNA component (M1 or rnpB) and a protein subunit.

It carries out the reaction Endonucleolytic cleavage of RNA, removing 5'-extranucleotides from tRNA precursor.. In terms of biological role, RNaseP catalyzes the removal of the 5'-leader sequence from pre-tRNA to produce the mature 5'-terminus. It can also cleave other RNA substrates such as 4.5S RNA. The protein component plays an auxiliary but essential role in vivo by binding to the 5'-leader sequence and broadening the substrate specificity of the ribozyme. This Chromohalobacter salexigens (strain ATCC BAA-138 / DSM 3043 / CIP 106854 / NCIMB 13768 / 1H11) protein is Ribonuclease P protein component.